Reading from the N-terminus, the 5054-residue chain is Malformin synthetase mlfA (5054 aa).

The adenylation 1 stretch occupies residues 194–585; the sequence is ERRAANRPHS…CGRADTQVKL (392 aa). The Carrier 1 domain maps to 723 to 799; it reads LGLSQLEQEI…EASSLAEVQE (77 aa). Ser760 bears the O-(pantetheine 4'-phosphoryl)serine mark. The condensation 1 stretch occupies residues 837 to 1268; that stretch reads EDVFPCTTMQ…ALNTLTLLQA (432 aa). Residues 1296–1685 form an adenylation 2 region; the sequence is DRWVTRQPES…GRKDTQVKLR (390 aa). The 78-residue stretch at 1823–1900 folds into the Carrier 2 domain; it reads TASSKLELTL…QLAAILGEAT (78 aa). The residue at position 1860 (Ser1860) is an O-(pantetheine 4'-phosphoryl)serine. 2 disordered regions span residues 1899–1929 and 1964–1994; these read ATGQ…NDGV and GSSS…VSPV. Composition is skewed to low complexity over residues 1904–1927 and 1965–1981; these read ESSA…STND and SSSC…SSSS. Residues 2033 to 2448 form a condensation 2 region; sequence EDIYPATALQ…GVSYRDKQTL (416 aa). An adenylation 3 region spans residues 2471–2863; sequence VRTPHAPAVF…IGRRDGQLKL (393 aa). Residues 2999 to 3075 enclose the Carrier 3 domain; it reads RPATAQEREM…QLMRHLSANG (77 aa). Position 3036 is an O-(pantetheine 4'-phosphoryl)serine (Ser3036). Condensation regions lie at residues 3092-3557 and 3578-3997; these read WVPL…TYDQ and DIYP…EQLV. Positions 4022 to 4412 are adenylation 4; the sequence is HSSREAACAW…VGRKDNQIKF (391 aa). A Carrier 4 domain is found at 4546-4622; sequence MPFTAAECKM…DLAYRTANLV (77 aa). Ser4583 carries the post-translational modification O-(pantetheine 4'-phosphoryl)serine. The segment at 4659 to 4972 is condensation 5; that stretch reads EVLPTTSFQR…LQTIVQHQNN (314 aa).

This sequence belongs to the NRP synthetase family.

Its pathway is secondary metabolite biosynthesis. In terms of biological role, nonribosomal peptide synthetase; part of the gene cluster that mediates the biosynthesis of malformins, cyclic pentapeptides with a disulfide bond between 2 consecutive cysteins, that show potential anti-tumor as well as antimalarial and antitrypanosomal properties. The nonribosomal peptide synthetase mlfA is responsible of the formation of the cyclic pentapeptide. The malformin biosynthesis clusters in malformin-producing fungi also contain enzymes involved in the formation of the disulfide bond between the two consecutive cysteins within malformins, in addition to additional tailoring enzymes such as methyltransferases or oxidoreductases. They are also composed of up to 4 major facilitator superfamily transporters, and transcription factors probably involved in the regulation of the expression of those clusters. The sequence is that of Malformin synthetase mlfA from Aspergillus niger (strain ATCC MYA-4892 / CBS 513.88 / FGSC A1513).